The sequence spans 105 residues: MNKIRKGDEVVVIAGRDKGKRGKVNRVQKDGKLVVSGVNMVKRHTKPNPMLGTAGGIVEKEAPIQASNVAIFNSATDKPDRIGFKILEDGKKVRIFKSTNELVDN.

The protein belongs to the universal ribosomal protein uL24 family. As to quaternary structure, part of the 50S ribosomal subunit.

One of two assembly initiator proteins, it binds directly to the 5'-end of the 23S rRNA, where it nucleates assembly of the 50S subunit. In terms of biological role, one of the proteins that surrounds the polypeptide exit tunnel on the outside of the subunit. This is Large ribosomal subunit protein uL24 from Hahella chejuensis (strain KCTC 2396).